The chain runs to 72 residues: Long neurotoxin 1 (72 aa).

Cystine bridges form between Cys-3–Cys-21, Cys-14–Cys-42, Cys-27–Cys-31, Cys-46–Cys-57, and Cys-58–Cys-63.

The protein belongs to the three-finger toxin family. Long-chain subfamily. Type II alpha-neurotoxin sub-subfamily. Expressed by the venom gland.

It is found in the secreted. Its function is as follows. Binds with high affinity to muscular (alpha-1/CHRNA1) and neuronal (alpha-7/CHRNA7) nicotinic acetylcholine receptor (nAChR) and inhibits acetylcholine from binding to the receptor, thereby impairing neuromuscular and neuronal transmission. This Naja anchietae (Anchieta's cobra) protein is Long neurotoxin 1.